Here is a 310-residue protein sequence, read N- to C-terminus: Cytosolic Fe-S cluster assembly factor Nubp1 homolog (310 aa).

Positions 9, 23, 26, and 32 each coordinate [4Fe-4S] cluster. Residue G63–S70 coordinates ATP. Residues C240 and C243 each contribute to the [4Fe-4S] cluster site.

Belongs to the Mrp/NBP35 ATP-binding proteins family. NUBP1/NBP35 subfamily. Heterotetramer of 2 Nubp1 and 2 Nubp2 chains. [4Fe-4S] cluster serves as cofactor.

The protein resides in the cytoplasm. Functionally, component of the cytosolic iron-sulfur (Fe/S) protein assembly (CIA) machinery. Required for maturation of extramitochondrial Fe-S proteins. The Nubp1-Nubp2 heterotetramer forms a Fe-S scaffold complex, mediating the de novo assembly of an Fe-S cluster and its transfer to target apoproteins. This chain is Cytosolic Fe-S cluster assembly factor Nubp1 homolog, found in Drosophila mojavensis (Fruit fly).